A 360-amino-acid chain; its full sequence is uncharacterized protein (360 aa).

3 Solcar repeats span residues 34–153 (VGVL…LSVW), 172–256 (PDWS…FKTN), and 266–355 (NPFV…FKFL). The next 6 membrane-spanning stretches (helical) occupy residues 40–60 (VSAS…LDVV), 125–145 (LWSG…FYFT), 178–198 (AVAG…IEMI), 225–247 (ISSF…GIYW), 269–289 (VVSF…THPF), and 327–348 (FSSG…MISF).

The protein belongs to the mitochondrial carrier (TC 2.A.29) family.

Its subcellular location is the mitochondrion inner membrane. This is an uncharacterized protein from Caenorhabditis elegans.